We begin with the raw amino-acid sequence, 86 residues long: Small ribosomal subunit protein bS16 (86 aa).

The protein belongs to the bacterial ribosomal protein bS16 family.

This is Small ribosomal subunit protein bS16 from Xanthomonas campestris pv. campestris (strain 8004).